A 122-amino-acid chain; its full sequence is Large ribosomal subunit protein uL18 (122 aa).

A compositionally biased stretch (basic residues) spans 1–22 (MDKNKKLQSKRLRRRRHVRNKL). Residues 1–25 (MDKNKKLQSKRLRRRRHVRNKLRGS) are disordered.

Belongs to the universal ribosomal protein uL18 family. As to quaternary structure, part of the 50S ribosomal subunit; part of the 5S rRNA/L5/L18/L25 subcomplex. Contacts the 5S and 23S rRNAs.

This is one of the proteins that bind and probably mediate the attachment of the 5S RNA into the large ribosomal subunit, where it forms part of the central protuberance. This chain is Large ribosomal subunit protein uL18, found in Rhodopirellula baltica (strain DSM 10527 / NCIMB 13988 / SH1).